We begin with the raw amino-acid sequence, 300 residues long: Hairy/enhancer-of-split related with YRPW motif protein 1 (300 aa).

A disordered region spans residues 1–52; the sequence is MKRGHDYSSSDSELDENIEVEKESADENGNLSSAAGSMSPSTSSQILARKRR. Positions 32–44 are enriched in low complexity; sequence SSAAGSMSPSTSS. Positions 48–103 constitute a bHLH domain; sequence ARKRRRGIIEKRRRDRINNSLSELRRLVPSAFEKQGSAKLEKAEILQMTVDHLKML. In terms of domain architecture, Orange spans 121 to 157; sequence YRSLGFRECLAEVARYLSIIEGMDTTDPLRVRLVSHL. A compositionally biased stretch (low complexity) spans 199–210; the sequence is AHTSANSTSSST. Disordered stretches follow at residues 199-232 and 278-300; these read AHTS…LRVP and LSPT…IGAF. Positions 290–293 match the YRPW motif motif; that stretch reads YRPW.

This sequence belongs to the HEY family. In terms of assembly, efficient DNA binding requires dimerization with another bHLH protein. Binds DNA in the form of homodimer or more strongly as a heterodimer with hes1/hairy1 or hes4/hairy2b. Also weakly interacts with the bHLH proteins hes2, neurod1 and neurod4/ath3. Interacts (via Orange domain) with ccdc89/boip (via C-terminus).

The protein localises to the nucleus. In terms of biological role, downstream effector of Notch signaling. Transcriptional repressor which binds preferentially to the canonical E box sequence 5'-CACGTG-3'. Acts as a suppressor of neurogenesis by antagonizing proneural gene function. Functions during floorplate development. Plays a role in pronephros formation in the inhibition of distal tubule and duct cell fates and the promotion of glomus and proximal tubule formation. The polypeptide is Hairy/enhancer-of-split related with YRPW motif protein 1 (hey1) (Xenopus tropicalis (Western clawed frog)).